Reading from the N-terminus, the 197-residue chain is MTIAAGTDDNRQRSTWIWLIACLGVVAIQILTQHLMGRLWICECGYVKLWEGVVNSSGNSQHISDWYTPSHIIHGFLFYGLGYLLLRGKPLSVRLLLATLIESAWEIAENTPMVINRYRSATISLDYFGDSILNSTMDTLAMAAGFLLASRLPVAVTVTIAIVLELFTGWIIRDNLTLNVLMLVWPLDAVKAWQAGL.

3 consecutive transmembrane segments (helical) span residues 16-36 (WIWL…QHLM), 66-86 (WYTP…YLLL), and 152-172 (LPVA…GWII).

It belongs to the UPF0314 family.

The protein resides in the cell membrane. This chain is UPF0314 protein NGR_c32320, found in Sinorhizobium fredii (strain NBRC 101917 / NGR234).